The following is a 334-amino-acid chain: MVISLKNRNFLKLLDYTPAEIQHLIDLAIELKAAKKAGCEKQTLIGKNIALIFEKTSTRTRCAFEVAAFDQGAQVTYLGPSGSQIGHKESMKDTARVLGRMYDGIEYRGFGQHIVEELGEYAGVPVWNGLTDEFHPTQILADLMTMLEHAPGKTLPELSFAYLGDARNNMGNSLMVGAAKMGMDIRLIAPKSFWPDAALVAQCREIASVTGARITLTESVEDGVHGVDFLYTDVWVSMGEPKEAWAERVSLMTPYQVNQQVVNATGNPDVKFMHCLPAFHNEHTKVGREIEMAYGLKGLEVTEEVFESAGSIVFDEAENRMHTIKAVMVATLGD.

Carbamoyl phosphate contacts are provided by residues 57 to 60, glutamine 84, arginine 108, and 135 to 138; these read STRT and HPTQ. Residues asparagine 169, aspartate 233, and 237 to 238 contribute to the L-ornithine site; that span reads SM. Residues 275–276 and arginine 320 each bind carbamoyl phosphate; that span reads CL.

Belongs to the aspartate/ornithine carbamoyltransferase superfamily. OTCase family.

The protein resides in the cytoplasm. The enzyme catalyses carbamoyl phosphate + L-ornithine = L-citrulline + phosphate + H(+). It functions in the pathway amino-acid degradation; L-arginine degradation via ADI pathway; carbamoyl phosphate from L-arginine: step 2/2. Reversibly catalyzes the transfer of the carbamoyl group from carbamoyl phosphate (CP) to the N(epsilon) atom of ornithine (ORN) to produce L-citrulline. This Salmonella typhimurium (strain LT2 / SGSC1412 / ATCC 700720) protein is Ornithine carbamoyltransferase, catabolic (arcB).